Here is a 239-residue protein sequence, read N- to C-terminus: Sugar fermentation stimulation protein homolog (239 aa).

The protein belongs to the SfsA family.

This is Sugar fermentation stimulation protein homolog from Methylobacterium sp. (strain 4-46).